The chain runs to 481 residues: tRNA pseudouridine(38/39) synthase (481 aa).

Ala-2 carries the N-acetylalanine modification. Over residues 29–41 (KKEQAKNKEDSNI) the composition is skewed to basic and acidic residues. Residues 29-50 (KKEQAKNKEDSNIRENSAGAGK) are disordered. Asp-118 (nucleophile) is an active-site residue. Substrate is bound at residue Tyr-195. Phosphothreonine occurs at positions 456, 466, and 468.

The protein belongs to the tRNA pseudouridine synthase TruA family.

The protein resides in the nucleus. The catalysed reaction is uridine(38/39) in tRNA = pseudouridine(38/39) in tRNA. Its function is as follows. Formation of pseudouridine at position 39 in the anticodon stem and loop of transfer RNAs. This is tRNA pseudouridine(38/39) synthase (PUS3) from Homo sapiens (Human).